Here is a 242-residue protein sequence, read N- to C-terminus: Uridylate kinase (242 aa).

11-14 (KLSG) contacts ATP. The segment at 19–24 (GNMGYG) is involved in allosteric activation by GTP. Glycine 53 serves as a coordination point for UMP. 2 residues coordinate ATP: glycine 54 and arginine 58. UMP is bound by residues aspartate 73 and 134–141 (SGNPFFTT). ATP-binding residues include threonine 161, tyrosine 167, and aspartate 170.

The protein belongs to the UMP kinase family. Homohexamer.

It is found in the cytoplasm. The catalysed reaction is UMP + ATP = UDP + ADP. It participates in pyrimidine metabolism; CTP biosynthesis via de novo pathway; UDP from UMP (UMPK route): step 1/1. With respect to regulation, allosterically activated by GTP. Inhibited by UTP. In terms of biological role, catalyzes the reversible phosphorylation of UMP to UDP. The polypeptide is Uridylate kinase (Nostoc sp. (strain PCC 7120 / SAG 25.82 / UTEX 2576)).